The following is a 170-amino-acid chain: MVDTAKNTKLFTSYGVSTSKTVTPEIAAKLISKAKRPLLMVGTLTLDPELLDRVVKISKTANIPIAATGSSLASLADKDVDAEYINAHMLGFYLTDPNWPGLDGNGNYDTVIVLGFKKFYINQVLSAAKNFSNLKTIAIERGYIQNATMSFGNLSKADHYAALDELIDLL.

This sequence belongs to the CdhB family. Heterotetramer of two alpha and two epsilon subunits. The ACDS complex is made up of alpha, epsilon, beta, gamma and delta subunits with a probable stoichiometry of (alpha(2)epsilon(2))(4)-beta(8)-(gamma(1)delta(1))(8).

It participates in one-carbon metabolism; methanogenesis from acetate. Part of a complex that catalyzes the reversible cleavage of acetyl-CoA, allowing growth on acetate as sole source of carbon and energy. The alpha-epsilon subcomponent functions as a carbon monoxide dehydrogenase. The precise role of the epsilon subunit is unclear; it may have a stabilizing role within the alpha(2)epsilon(2) component and/or be involved in electron transfer to FAD during a potential FAD-mediated CO oxidation. The protein is Acetyl-CoA decarbonylase/synthase complex subunit epsilon 1 (cdhB1) of Methanosarcina acetivorans (strain ATCC 35395 / DSM 2834 / JCM 12185 / C2A).